The sequence spans 318 residues: 4-hydroxy-3-methylbut-2-enyl diphosphate reductase (318 aa).

Cysteine 12 serves as a coordination point for [4Fe-4S] cluster. Residues histidine 41 and histidine 74 each contribute to the (2E)-4-hydroxy-3-methylbut-2-enyl diphosphate site. Dimethylallyl diphosphate is bound by residues histidine 41 and histidine 74. Residues histidine 41 and histidine 74 each coordinate isopentenyl diphosphate. Cysteine 96 contributes to the [4Fe-4S] cluster binding site. Histidine 124 contacts (2E)-4-hydroxy-3-methylbut-2-enyl diphosphate. Dimethylallyl diphosphate is bound at residue histidine 124. Residue histidine 124 participates in isopentenyl diphosphate binding. The active-site Proton donor is glutamate 126. Threonine 168 contributes to the (2E)-4-hydroxy-3-methylbut-2-enyl diphosphate binding site. Cysteine 198 contributes to the [4Fe-4S] cluster binding site. (2E)-4-hydroxy-3-methylbut-2-enyl diphosphate contacts are provided by serine 226, serine 227, asparagine 228, and serine 270. Residues serine 226, serine 227, asparagine 228, and serine 270 each coordinate dimethylallyl diphosphate. Positions 226, 227, 228, and 270 each coordinate isopentenyl diphosphate.

Belongs to the IspH family. Requires [4Fe-4S] cluster as cofactor.

The enzyme catalyses isopentenyl diphosphate + 2 oxidized [2Fe-2S]-[ferredoxin] + H2O = (2E)-4-hydroxy-3-methylbut-2-enyl diphosphate + 2 reduced [2Fe-2S]-[ferredoxin] + 2 H(+). It carries out the reaction dimethylallyl diphosphate + 2 oxidized [2Fe-2S]-[ferredoxin] + H2O = (2E)-4-hydroxy-3-methylbut-2-enyl diphosphate + 2 reduced [2Fe-2S]-[ferredoxin] + 2 H(+). It participates in isoprenoid biosynthesis; dimethylallyl diphosphate biosynthesis; dimethylallyl diphosphate from (2E)-4-hydroxy-3-methylbutenyl diphosphate: step 1/1. Its pathway is isoprenoid biosynthesis; isopentenyl diphosphate biosynthesis via DXP pathway; isopentenyl diphosphate from 1-deoxy-D-xylulose 5-phosphate: step 6/6. In terms of biological role, catalyzes the conversion of 1-hydroxy-2-methyl-2-(E)-butenyl 4-diphosphate (HMBPP) into a mixture of isopentenyl diphosphate (IPP) and dimethylallyl diphosphate (DMAPP). Acts in the terminal step of the DOXP/MEP pathway for isoprenoid precursor biosynthesis. This Psychrobacter sp. (strain PRwf-1) protein is 4-hydroxy-3-methylbut-2-enyl diphosphate reductase.